Consider the following 114-residue polypeptide: Hydrogenase maturation factor HypA (114 aa).

Histidine 2 is a binding site for Ni(2+). Cysteine 73, cysteine 76, cysteine 90, and cysteine 93 together coordinate Zn(2+).

This sequence belongs to the HypA/HybF family.

In terms of biological role, involved in the maturation of [NiFe] hydrogenases. Required for nickel insertion into the metal center of the hydrogenase. This Chloroflexus aggregans (strain MD-66 / DSM 9485) protein is Hydrogenase maturation factor HypA.